Consider the following 213-residue polypeptide: Peroxynitrite isomerase (213 aa).

Residues 1–10 are compositionally biased toward low complexity; it reads MGADATGDTA. The interval 1–26 is disordered; sequence MGADATGDTAARGDRAAHGDTASGGA. The short motif at 51-57 is the GXWXGXG element; that stretch reads GTWRGEG. Position 203 (H203) interacts with heme b.

It belongs to the nitrobindin family. Homodimer. Heme b is required as a cofactor.

It catalyses the reaction peroxynitrite = nitrate. The protein operates within nitrogen metabolism. In terms of biological role, heme-binding protein able to scavenge peroxynitrite and to protect free L-tyrosine against peroxynitrite-mediated nitration, by acting as a peroxynitrite isomerase that converts peroxynitrite to nitrate. Therefore, this protein likely plays a role in peroxynitrite sensing and in the detoxification of reactive nitrogen and oxygen species (RNS and ROS, respectively). Is able to bind nitric oxide (NO) in vitro, but may act as a sensor of peroxynitrite levels in vivo. This Parafrankia sp. (strain EAN1pec) protein is Peroxynitrite isomerase.